A 642-amino-acid polypeptide reads, in one-letter code: Chaperone protein DnaK (642 aa).

Threonine 196 bears the Phosphothreonine; by autocatalysis mark. Positions 593–603 (STMYQTPSGDT) are enriched in polar residues. The interval 593 to 642 (STMYQTPSGDTPPSEPETGASEESKGGDKTQGDGEVDAEYEVIDGNDKDK) is disordered. Over residues 614 to 624 (EESKGGDKTQG) the composition is skewed to basic and acidic residues. The span at 626-636 (GEVDAEYEVID) shows a compositional bias: acidic residues.

This sequence belongs to the heat shock protein 70 family.

Its function is as follows. Acts as a chaperone. The chain is Chaperone protein DnaK from Chlorobium phaeobacteroides (strain BS1).